The chain runs to 225 residues: Thymidylate kinase (225 aa).

Residue 10–17 (GIDGAGKS) participates in ATP binding.

The protein belongs to the thymidylate kinase family.

It carries out the reaction dTMP + ATP = dTDP + ADP. Its function is as follows. Phosphorylation of dTMP to form dTDP in both de novo and salvage pathways of dTTP synthesis. The polypeptide is Thymidylate kinase (Polaromonas sp. (strain JS666 / ATCC BAA-500)).